Here is an 81-residue protein sequence, read N- to C-terminus: Exodeoxyribonuclease 7 small subunit (81 aa).

It belongs to the XseB family. Heterooligomer composed of large and small subunits.

It localises to the cytoplasm. The catalysed reaction is Exonucleolytic cleavage in either 5'- to 3'- or 3'- to 5'-direction to yield nucleoside 5'-phosphates.. Its function is as follows. Bidirectionally degrades single-stranded DNA into large acid-insoluble oligonucleotides, which are then degraded further into small acid-soluble oligonucleotides. This Rhodopseudomonas palustris (strain BisA53) protein is Exodeoxyribonuclease 7 small subunit.